The primary structure comprises 359 residues: RNA-binding protein 4B (359 aa).

RRM domains lie at 2–72 and 78–148; these read VKLF…ASKN and TKLH…LSTS. The segment at 160-177 adopts a CCHC-type zinc-finger fold; the sequence is SGCYRCGKEGHWSKECPV. The interaction with TNPO3 stretch occupies residues 196 to 359; sequence AVRPPYTMGY…YVDRARYSAF (164 aa).

As to quaternary structure, interacts with TNPO3, which may mediate nuclear import of the protein.

Its subcellular location is the nucleus. It is found in the nucleolus. Functionally, required for the translational activation of PER1 mRNA in response to circadian clock. Binds directly to the 3'-UTR of the PER1 mRNA. This is RNA-binding protein 4B (RBM4B) from Sus scrofa (Pig).